We begin with the raw amino-acid sequence, 365 residues long: Histidinol-phosphate aminotransferase (365 aa).

Residues 1-21 (MSRPVPNPGILDIAPYTPGKS) are disordered. Lys221 carries the post-translational modification N6-(pyridoxal phosphate)lysine.

Belongs to the class-II pyridoxal-phosphate-dependent aminotransferase family. Histidinol-phosphate aminotransferase subfamily. Homodimer. Pyridoxal 5'-phosphate serves as cofactor.

It carries out the reaction L-histidinol phosphate + 2-oxoglutarate = 3-(imidazol-4-yl)-2-oxopropyl phosphate + L-glutamate. It participates in amino-acid biosynthesis; L-histidine biosynthesis; L-histidine from 5-phospho-alpha-D-ribose 1-diphosphate: step 7/9. The sequence is that of Histidinol-phosphate aminotransferase from Rhodopseudomonas palustris (strain ATCC BAA-98 / CGA009).